The primary structure comprises 463 residues: MATVAATTKVPEIRDVTRIERIGAHSHIRGLGLDDALEPRQASQGMVGQLAARRAAGVVLEMIREGKIAGRAVLIAGQPGTGKTAIAMGMAQALGPDTPFTAIAGSEIFSLEMSKTEALTQAFRRSIGVRIKEETEIIEGEVVEIQIDRPATGTGSKVGKLTLKTTEMETIYDLGTKMIESLTKDKVQAGDVITIDKATGKISKLGRSFTRARDYDAMGSQTKFVQCPDGELQKRKEVVHTVSLHEIDVINSRTQGFLALFSGDTGEIKSEVREQINAKVAEWREEGKAEIIPGVLFIDEVHMLDIESFSFLNRALESDMAPVLIMATNRGITRIRGTSYQSPHGIPIDLLDRLLIVSTSPYSEKDTKQILRIRCEEEDVEMSEDAYTVLTRIGLETSLRYAIQLITAASLVCRKRKGTEVQVDDIKRVYSLFLDESRSTQYMKEYQDAFLFNELKGETMDTS.

A2 carries the N-acetylalanine modification. K9 is covalently cross-linked (Glycyl lysine isopeptide (Lys-Gly) (interchain with G-Cter in SUMO2)). 77 to 84 lines the ATP pocket; the sequence is GQPGTGKT. The residue at position 437 (S437) is a Phosphoserine. Glycyl lysine isopeptide (Lys-Gly) (interchain with G-Cter in SUMO2) cross-links involve residues K444 and K456.

Belongs to the RuvB family. In terms of assembly, forms homohexameric rings. Can form a dodecamer with RUVBL1 made of two stacked hexameric rings; however, even though RUVBL1 and RUVBL2 are present in equimolar ratio, the oligomeric status of each hexamer is not known. Oligomerization may regulate binding to nucleic acids and conversely, binding to nucleic acids may affect the dodecameric assembly. Interaction of the complex with DHX34 results in conformational changes of the N-terminus of the RUVBL2 subunits, resulting in loss of nucleotide binding ability and ATP hydrolysis of the complex. Interacts with the transcriptional activation domain of MYC. Interacts with ATF2. Component of the RNA polymerase II holoenzyme complex. May also act to bridge the LEF1/TCF1-CTNNB1 complex and TBP. Component of the NuA4 histone acetyltransferase complex which contains the catalytic subunit KAT5/TIP60 and the subunits EP400, TRRAP/PAF400, BRD8/SMAP, EPC1, DMAP1/DNMAP1, RUVBL1/TIP49, RUVBL2, ING3, actin, ACTL6A/BAF53A, MORF4L1/MRG15, MORF4L2/MRGX, MRGBP, YEATS4/GAS41, VPS72/YL1 and MEAF6. The NuA4 complex interacts with MYC and the adenovirus E1A protein. RUVBL2 interacts with EP400. Component of a NuA4-related complex which contains EP400, TRRAP/PAF400, SRCAP, BRD8/SMAP, EPC1, DMAP1/DNMAP1, RUVBL1/TIP49, RUVBL2, actin, ACTL6A/BAF53A, VPS72 and YEATS4/GAS41. Interacts with NPAT. Component of the chromatin-remodeling INO80 complex; specifically part of a complex module associated with the helicase ATP-binding and the helicase C-terminal domain of INO80. Component of some MLL1/MLL complex, at least composed of the core components KMT2A/MLL1, ASH2L, HCFC1/HCF1, WDR5 and RBBP5, as well as the facultative components BACC1, CHD8, E2F6, HSP70, INO80C, KANSL1, LAS1L, MAX, MCRS1, MGA, MYST1/MOF, PELP1, PHF20, PRP31, RING2, RUVB1/TIP49A, RUVB2/TIP49B, SENP3, TAF1, TAF4, TAF6, TAF7, TAF9 and TEX10. Interacts with IGHMBP2. Interacts with TELO2. Interacts with HINT1. Component of a SWR1-like complex. Component of the R2TP complex composed at least of RUVBL1, RUVBL2, RPAP3 and PIHD1. Component of the PAQosome complex which is responsible for the biogenesis of several protein complexes and which consists of R2TP complex members RUVBL1, RUVBL2, RPAP3 and PIH1D1, URI complex members PFDN2, PFDN6, PDRG1, UXT and URI1 as well as ASDURF, POLR2E and DNAAF10/WDR92. Interacts with ITFG1. Interacts with ZMYND10. Interacts with WAC; WAC positively regulates MTOR activity by promoting the assembly of the TTT complex composed of TELO2, TTI1 and TTI2 and the RUVBL complex composed of RUVBL1 and RUVBL2 into the TTT-RUVBL complex which leads to the dimerization of the mTORC1 complex and its subsequent activation. Forms a complex with APPL1 and APPL2. Interacts with ZNHIT2 (via HIT-type zinc finger) in the presence of ATP or ADP; shows a stronger interaction in the presence of ADP. The RUVBL1/RUVBL2 complex interacts with ZNHIT1 (via HIT-type zinc finger), ZNHIT3 (via HIT-type zinc finger), ZNHIT6 (via HIT-type zinc finger) and DDX59/ZNHIT5 (via HIT-type zinc finger) in the presence of ADP. Interacts with NOPCHAP1; the interaction is direct and disrupted upon ATP binding. Interacts with SMG1.

The protein localises to the nucleus matrix. The protein resides in the nucleus. Its subcellular location is the nucleoplasm. It localises to the cytoplasm. It is found in the membrane. The protein localises to the dynein axonemal particle. It catalyses the reaction ATP + H2O = ADP + phosphate + H(+). Functionally, possesses single-stranded DNA-stimulated ATPase and ATP-dependent DNA helicase (5' to 3') activity; hexamerization is thought to be critical for ATP hydrolysis and adjacent subunits in the ring-like structure contribute to the ATPase activity. Component of the NuA4 histone acetyltransferase complex which is involved in transcriptional activation of select genes principally by acetylation of nucleosomal histones H4 and H2A. This modification may both alter nucleosome-DNA interactions and promote interaction of the modified histones with other proteins which positively regulate transcription. This complex may be required for the activation of transcriptional programs associated with oncogene and proto-oncogene mediated growth induction, tumor suppressor mediated growth arrest and replicative senescence, apoptosis, and DNA repair. The NuA4 complex ATPase and helicase activities seem to be, at least in part, contributed by the association of RUVBL1 and RUVBL2 with EP400. NuA4 may also play a direct role in DNA repair when recruited to sites of DNA damage. Component of a SWR1-like complex that specifically mediates the removal of histone H2A.Z/H2AZ1 from the nucleosome. Proposed core component of the chromatin remodeling INO80 complex which exhibits DNA- and nucleosome-activated ATPase activity and catalyzes ATP-dependent nucleosome sliding. Plays an essential role in oncogenic transformation by MYC and also modulates transcriptional activation by the LEF1/TCF1-CTNNB1 complex. May also inhibit the transcriptional activity of ATF2. Involved in the endoplasmic reticulum (ER)-associated degradation (ERAD) pathway where it negatively regulates expression of ER stress response genes. May play a role in regulating the composition of the U5 snRNP complex. The polypeptide is RuvB-like 2 (Ruvbl2) (Mus musculus (Mouse)).